A 291-amino-acid chain; its full sequence is uncharacterized protein (291 aa).

NAD(+) is bound by residues 5 to 19 (AFIG…MAGH) and Thr-97. Lys-172 is an active-site residue. Lys-240 serves as a coordination point for NAD(+).

The protein belongs to the HIBADH-related family.

This is an uncharacterized protein from Shewanella frigidimarina (strain NCIMB 400).